The sequence spans 631 residues: Nucleoside triphosphatase I (631 aa).

The Helicase ATP-binding domain maps to 42 to 204 (FLGLDSMHSL…TMLVNLLRPG (163 aa)). 55-62 (HETGVGKT) contributes to the ATP binding site. The DEXH box motif lies at 141-144 (DECH). The Helicase C-terminal domain maps to 367 to 532 (KFIDVCLGIL…EFVQLFRVFK (166 aa)).

It belongs to the helicase family. NPH I subfamily. In terms of assembly, monomer.

The catalysed reaction is a ribonucleoside 5'-triphosphate + H2O = a ribonucleoside 5'-diphosphate + phosphate + H(+). Functionally, serves two roles in transcription; it acts in concert with viral termination factor/capping enzyme to catalyze release of UUUUUNU-containing nascent RNA from the elongation complex, and it acts by itself as a polymerase elongation factor to facilitate readthrough of intrinsic pause sites. The polypeptide is Nucleoside triphosphatase I (NPH1) (Homo sapiens (Human)).